The following is a 126-amino-acid chain: Fatty acid-binding protein 1, liver (126 aa).

This sequence belongs to the calycin superfamily. Fatty-acid binding protein (FABP) family.

The protein resides in the cytoplasm. Binds free fatty acids and their coenzyme A derivatives, bilirubin, and some other small molecules in the cytoplasm. May be involved in intracellular lipid transport. The specificity of axolotl L-FABP differs from that of LB-FABP. The polypeptide is Fatty acid-binding protein 1, liver (Ambystoma mexicanum (Axolotl)).